Consider the following 252-residue polypeptide: SPbeta prophage-derived uncharacterized protein YomH (252 aa).

The polypeptide is SPbeta prophage-derived uncharacterized protein YomH (yomH) (Bacillus subtilis (strain 168)).